Consider the following 249-residue polypeptide: MGRGRVELKRIENKINRQVTFSKRRNGLLKKAYELSVLCDAEVALIIFSSRGKLYEFGSAGINKTLEKYNSCCYNAQGSNSALAGGEHQSWYQEMSRLKTKLECLQRSQRHMLGEDLGPLSIKELQQLEKQLEYSLSQARQRKTQIMMEQVDDLRRKERQLGELNKQLKNKLEAEADSSNCRSAIQDSWVHGTVVSGGRVLNAQPPPDIDCEPTLQIGYYQFVRPEAANPRSNGGGGDQNNNFVMGWPL.

Residues 1–61 (MGRGRVELKR…GKLYEFGSAG (61 aa)) enclose the MADS-box domain. The K-box domain occupies 88–178 (HQSWYQEMSR…KNKLEAEADS (91 aa)). The segment at 228–249 (ANPRSNGGGGDQNNNFVMGWPL) is disordered.

As to quaternary structure, may interact with the K-box of MADS6. As to expression, expressed in the floral meristem, lodicule, palea, lemma, receptacle, empty glume, stamen, pistil, and ovule.

The protein localises to the nucleus. In terms of biological role, probable transcription factor. Plays minor but redundant roles with MADS6 in floral development. The chain is MADS-box transcription factor 17 (MADS17) from Oryza sativa subsp. japonica (Rice).